Reading from the N-terminus, the 287-residue chain is MRGTIMKGIGGFYYVNTDRGIIECRARGKFRYNGLFPMVGDKVEIKLERDQGIIDEICPRISQLKRPAVANVTQALVVFAFNHPEINEDLLNKFLISCEFNNLKPIVCFNKLDLADKEKKLDVIDMIRNTGYEVIFLKAKEGYGIDKVREKLKDNITVLCGPSGVGKSTILNAIYGKELMETGQISHKLNRGKHTTRHSEIIELEDGFMVDTPGFSSLDIGHITKDKLQYCFPEFIEFIGICKFTGCVHHKEPDCAVKSALYDDKINKRRYDFYVKTLNEISSKKKY.

The 158-residue stretch at 61 to 218 (ISQLKRPAVA…MVDTPGFSSL (158 aa)) folds into the CP-type G domain. GTP is bound by residues 110 to 113 (NKLD) and 161 to 169 (GPSGVGKST). Zn(2+)-binding residues include Cys-242, Cys-247, His-249, and Cys-255.

It belongs to the TRAFAC class YlqF/YawG GTPase family. RsgA subfamily. As to quaternary structure, monomer. Associates with 30S ribosomal subunit, binds 16S rRNA. The cofactor is Zn(2+).

Its subcellular location is the cytoplasm. In terms of biological role, one of several proteins that assist in the late maturation steps of the functional core of the 30S ribosomal subunit. Helps release RbfA from mature subunits. May play a role in the assembly of ribosomal proteins into the subunit. Circularly permuted GTPase that catalyzes slow GTP hydrolysis, GTPase activity is stimulated by the 30S ribosomal subunit. The sequence is that of Small ribosomal subunit biogenesis GTPase RsgA from Clostridium kluyveri (strain NBRC 12016).